Reading from the N-terminus, the 82-residue chain is uncharacterized protein (82 aa).

The Resolvase/invertase-type recombinase catalytic domain maps to 11 to 82 (NVGIYVRVST…HIEQGIMTHC (72 aa)). The O-(5'-phospho-DNA)-serine intermediate role is filled by Ser-19.

Belongs to the site-specific recombinase resolvase family.

This is an uncharacterized protein from Bacillus phage phi105 (Bacteriophage phi-105).